Consider the following 619-residue polypeptide: Chaperone protein HscA homolog (619 aa).

This sequence belongs to the heat shock protein 70 family.

Functionally, chaperone involved in the maturation of iron-sulfur cluster-containing proteins. Has a low intrinsic ATPase activity which is markedly stimulated by HscB. This is Chaperone protein HscA homolog from Pseudomonas paraeruginosa (strain DSM 24068 / PA7) (Pseudomonas aeruginosa (strain PA7)).